Reading from the N-terminus, the 357-residue chain is MTETAPAIEAILAEYGELEQRLADPELHADPAAAKKVGRRFAQISPIVSTYHKLEAARGDLEAARELAADDASFAAEVDELTTKVADLDDRLTDLLAPRDPHDADDIVLEVKSGEGGEESALFAADLARMYIRYAERHGWTVTMLGETTSDLGGYKDATLSIAGKGDSADGVWSRLKFEGGVHRVQRVPVTESQGRVHTSAAGVLVYPEPDEVEQVQIDESDLRIDVYRSSGKGGQGVNTTDSAVRITHLPTGIVVTCQNERSQLQNKARAMQVLAARLQALAEEQASADASADRASQIRTVDRSERIRTYNYPENRIADHRINYKSHNLDQVLDGDLDPLFDALAAADKQARLQNT.

N5-methylglutamine is present on Gln236.

This sequence belongs to the prokaryotic/mitochondrial release factor family. Methylated by PrmC. Methylation increases the termination efficiency of RF1.

Its subcellular location is the cytoplasm. In terms of biological role, peptide chain release factor 1 directs the termination of translation in response to the peptide chain termination codons UAG and UAA. The chain is Peptide chain release factor 1 from Mycolicibacterium vanbaalenii (strain DSM 7251 / JCM 13017 / BCRC 16820 / KCTC 9966 / NRRL B-24157 / PYR-1) (Mycobacterium vanbaalenii).